The sequence spans 468 residues: Ribulose bisphosphate carboxylase large chain (468 aa).

K4 is modified (N6,N6,N6-trimethyllysine). N113 and T163 together coordinate substrate. The Proton acceptor role is filled by K165. A substrate-binding site is contributed by K167. K191, D193, and E194 together coordinate Mg(2+). The residue at position 191 (K191) is an N6-carboxylysine. The Proton acceptor role is filled by H284. 3 residues coordinate substrate: R285, H317, and S369.

It belongs to the RuBisCO large chain family. Type I subfamily. In terms of assembly, heterohexadecamer of 8 large chains and 8 small chains; disulfide-linked. The disulfide link is formed within the large subunit homodimers. Mg(2+) serves as cofactor. In terms of processing, the disulfide bond which can form in the large chain dimeric partners within the hexadecamer appears to be associated with oxidative stress and protein turnover.

It localises to the plastid. Its subcellular location is the chloroplast. It catalyses the reaction 2 (2R)-3-phosphoglycerate + 2 H(+) = D-ribulose 1,5-bisphosphate + CO2 + H2O. It carries out the reaction D-ribulose 1,5-bisphosphate + O2 = 2-phosphoglycolate + (2R)-3-phosphoglycerate + 2 H(+). RuBisCO catalyzes two reactions: the carboxylation of D-ribulose 1,5-bisphosphate, the primary event in carbon dioxide fixation, as well as the oxidative fragmentation of the pentose substrate in the photorespiration process. Both reactions occur simultaneously and in competition at the same active site. The protein is Ribulose bisphosphate carboxylase large chain of Pandorea jasminoides (Bower vine).